The primary structure comprises 460 residues: uncharacterized protein (460 aa).

Positions 5 to 63 (TWHQGELIEVAIADLSDTGDGVGRFAERVVFVPDTVPGDRVLVRLLHVKPNYAHGKLHQ) constitute a TRAM domain. [4Fe-4S] cluster contacts are provided by cysteine 76, cysteine 82, cysteine 85, and cysteine 164. S-adenosyl-L-methionine-binding residues include glutamine 288, tyrosine 317, glutamate 338, and aspartate 383. The active-site Nucleophile is the cysteine 410.

This sequence belongs to the class I-like SAM-binding methyltransferase superfamily. RNA M5U methyltransferase family.

This is an uncharacterized protein from Nostoc sp. (strain PCC 7120 / SAG 25.82 / UTEX 2576).